Consider the following 170-residue polypeptide: Lipoprotein signal peptidase (170 aa).

The next 3 helical transmembrane spans lie at 12-32 (WYWV…WVLA), 67-87 (WQRW…TVWL), and 93-113 (SLLK…GNLV). Active-site residues include D123 and D141. A helical membrane pass occupies residues 137-157 (FNIADSAIFIGAVLIIWDSFF).

The protein belongs to the peptidase A8 family.

Its subcellular location is the cell inner membrane. It catalyses the reaction Release of signal peptides from bacterial membrane prolipoproteins. Hydrolyzes -Xaa-Yaa-Zaa-|-(S,diacylglyceryl)Cys-, in which Xaa is hydrophobic (preferably Leu), and Yaa (Ala or Ser) and Zaa (Gly or Ala) have small, neutral side chains.. It functions in the pathway protein modification; lipoprotein biosynthesis (signal peptide cleavage). This protein specifically catalyzes the removal of signal peptides from prolipoproteins. The sequence is that of Lipoprotein signal peptidase from Shewanella oneidensis (strain ATCC 700550 / JCM 31522 / CIP 106686 / LMG 19005 / NCIMB 14063 / MR-1).